We begin with the raw amino-acid sequence, 259 residues long: Glandular kallikrein-10 (259 aa).

The signal sequence occupies residues Met1–Ala18. Residues Pro19 to Arg24 constitute a propeptide, activation peptide. One can recognise a Peptidase S1 domain in the interval Ile25 to Lys256. 5 disulfides stabilise this stretch: Cys31–Cys171, Cys48–Cys64, Cys150–Cys217, Cys182–Cys196, and Cys207–Cys232. His63 (charge relay system) is an active-site residue. 2 N-linked (GlcNAc...) asparagine glycosylation sites follow: Asn91 and Asn106. Residue Asp118 is the Charge relay system of the active site. Ser211 (charge relay system) is an active-site residue.

Belongs to the peptidase S1 family. Kallikrein subfamily. Heterodimer of a light chain and heavy chain linked by a disulfide bond. In terms of processing, probably N- and O-glycosylated. As to expression, kidney and submandibular gland, where it is found in the granular convoluted tubule and striated duct cells. It is likely that the enzyme is mainly synthesized in the granular convoluted tubules and then transferred to other tissues by release into the vasculature or interstitial space.

The enzyme catalyses Preferential cleavage of Arg-|-Xaa bonds in small molecule substrates. Highly selective action to release kallidin (lysyl-bradykinin) from kininogen involves hydrolysis of Met-|-Xaa or Leu-|-Xaa.. Functionally, glandular kallikreins cleave Met-Lys and Arg-Ser bonds in kininogen to release Lys-bradykinin. This protein may be involved in the regulation of renal function. The protein is Glandular kallikrein-10 (Klk10) of Rattus norvegicus (Rat).